The sequence spans 1610 residues: Adenylate cyclase type 10 (1610 aa).

2 Guanylate cyclase domains span residues 42–179 and 293–418; these read VLMF…RLAQ and TIVF…ARMM. Residues aspartate 47 and isoleucine 48 each coordinate Mg(2+). An ATP-binding site is contributed by 47–52; sequence DISGFT. Residue lysine 95 participates in hydrogencarbonate binding. Aspartate 99 serves as a coordination point for Mg(2+). Aspartate 99 and lysine 144 together coordinate ATP. 3 residues coordinate hydrogencarbonate: valine 167, arginine 176, and methionine 337. ATP contacts are provided by residues valine 406 and 412–416; that span reads NLAAR.

The protein belongs to the adenylyl cyclase class-4/guanylyl cyclase family. The cofactor is Mg(2+). It depends on Mn(2+) as a cofactor. Post-translationally, cleavage may occur to generate the active 48 kDa form. In terms of tissue distribution, detected in airway epithelial cells and testis (at protein level). Weakly expressed in multiple tissues. Expressed in brain, heart, kidney, liver, lung, pancreas, peripheral blood leukocytes, placenta, skeletal muscle, stomach, thymus, airway epithelial cells, duodenum, jejunum and ileum. Very low level of expression in bone.

Its subcellular location is the cell membrane. It localises to the cytoplasm. It is found in the cytoskeleton. The protein resides in the perinuclear region. The protein localises to the nucleus. Its subcellular location is the cell projection. It localises to the cilium. It is found in the mitochondrion. The enzyme catalyses ATP = 3',5'-cyclic AMP + diphosphate. Activated by manganese or magnesium ions. In the presence of magnesium ions, the enzyme is activated by bicarbonate. In the presence of manganese ions, the enzyme is inhibited by bicarbonate. In the absence of magnesium and bicarbonate, the enzyme is weakly activated by calcium. Calcium mildly increases the enzyme activity, also in the presence of magnesium ions. In terms of biological role, catalyzes the formation of the signaling molecule cAMP. May function as sensor that mediates responses to changes in cellular bicarbonate and CO(2) levels. Has a critical role in mammalian spermatogenesis by producing the cAMP which regulates cAMP-responsive nuclear factors indispensable for sperm maturation in the epididymis. Induces capacitation, the maturational process that sperm undergo prior to fertilization. Involved in ciliary beat regulation. The protein is Adenylate cyclase type 10 (ADCY10) of Homo sapiens (Human).